The following is a 361-amino-acid chain: 3-dehydroquinate synthase (361 aa).

Residues 72 to 77 (SGEKEK), 130 to 131 (TT), Lys142, and Lys151 contribute to the NAD(+) site. Positions 184, 247, and 264 each coordinate Zn(2+).

This sequence belongs to the sugar phosphate cyclases superfamily. Dehydroquinate synthase family. The cofactor is Co(2+). Zn(2+) serves as cofactor. Requires NAD(+) as cofactor.

The protein localises to the cytoplasm. The enzyme catalyses 7-phospho-2-dehydro-3-deoxy-D-arabino-heptonate = 3-dehydroquinate + phosphate. Its pathway is metabolic intermediate biosynthesis; chorismate biosynthesis; chorismate from D-erythrose 4-phosphate and phosphoenolpyruvate: step 2/7. Its function is as follows. Catalyzes the conversion of 3-deoxy-D-arabino-heptulosonate 7-phosphate (DAHP) to dehydroquinate (DHQ). This chain is 3-dehydroquinate synthase, found in Bacillus mycoides (strain KBAB4) (Bacillus weihenstephanensis).